Consider the following 233-residue polypeptide: 3-dehydroquinate dehydratase (233 aa).

3-dehydroquinate-binding positions include 39–41 (EIR) and Arg73. His132 functions as the Proton donor/acceptor in the catalytic mechanism. Lys159 (schiff-base intermediate with substrate) is an active-site residue. 3-dehydroquinate is bound by residues Arg196 and Gln219.

It belongs to the type-I 3-dehydroquinase family. Homodimer.

It carries out the reaction 3-dehydroquinate = 3-dehydroshikimate + H2O. It functions in the pathway metabolic intermediate biosynthesis; chorismate biosynthesis; chorismate from D-erythrose 4-phosphate and phosphoenolpyruvate: step 3/7. In terms of biological role, involved in the third step of the chorismate pathway, which leads to the biosynthesis of aromatic amino acids. Catalyzes the cis-dehydration of 3-dehydroquinate (DHQ) and introduces the first double bond of the aromatic ring to yield 3-dehydroshikimate. The sequence is that of 3-dehydroquinate dehydratase from Methanococcoides burtonii (strain DSM 6242 / NBRC 107633 / OCM 468 / ACE-M).